We begin with the raw amino-acid sequence, 31 residues long: Cytochrome b6-f complex subunit 6 (31 aa).

Residues 4–24 (ILTYFGILFGILTITVIIFVA) form a helical membrane-spanning segment.

The protein belongs to the PetL family. As to quaternary structure, the 4 large subunits of the cytochrome b6-f complex are cytochrome b6, subunit IV (17 kDa polypeptide, PetD), cytochrome f and the Rieske protein, while the 4 small subunits are PetG, PetL, PetM and PetN. The complex functions as a dimer.

Its subcellular location is the plastid. The protein resides in the chloroplast thylakoid membrane. In terms of biological role, component of the cytochrome b6-f complex, which mediates electron transfer between photosystem II (PSII) and photosystem I (PSI), cyclic electron flow around PSI, and state transitions. PetL is important for photoautotrophic growth as well as for electron transfer efficiency and stability of the cytochrome b6-f complex. The polypeptide is Cytochrome b6-f complex subunit 6 (Chaetosphaeridium globosum (Charophycean green alga)).